An 819-amino-acid polypeptide reads, in one-letter code: Outer membrane usher protein CssD (819 aa).

It belongs to the fimbrial export usher family.

The protein resides in the cell outer membrane. Functionally, involved in the export and assembly of C6 fimbrial subunits across the outer membrane. This Escherichia coli protein is Outer membrane usher protein CssD (cssD).